We begin with the raw amino-acid sequence, 131 residues long: Small ribosomal subunit protein bS6 (131 aa).

Residues 94 to 131 are disordered; sequence DAVTEESQLAKNADEKRARKATTRRPDSNDDNDNHSDD. Positions 117–131 are enriched in basic and acidic residues; the sequence is RRPDSNDDNDNHSDD.

The protein belongs to the bacterial ribosomal protein bS6 family.

Functionally, binds together with bS18 to 16S ribosomal RNA. This Psychrobacter cryohalolentis (strain ATCC BAA-1226 / DSM 17306 / VKM B-2378 / K5) protein is Small ribosomal subunit protein bS6.